A 284-amino-acid chain; its full sequence is 2-dehydro-3-deoxyphosphooctonate aldolase (284 aa).

Belongs to the KdsA family.

Its subcellular location is the cytoplasm. It catalyses the reaction D-arabinose 5-phosphate + phosphoenolpyruvate + H2O = 3-deoxy-alpha-D-manno-2-octulosonate-8-phosphate + phosphate. The protein operates within carbohydrate biosynthesis; 3-deoxy-D-manno-octulosonate biosynthesis; 3-deoxy-D-manno-octulosonate from D-ribulose 5-phosphate: step 2/3. It functions in the pathway bacterial outer membrane biogenesis; lipopolysaccharide biosynthesis. In Escherichia coli O157:H7, this protein is 2-dehydro-3-deoxyphosphooctonate aldolase.